The sequence spans 246 residues: Tyrosine recombinase XerD-like (246 aa).

A Core-binding (CB) domain is found at 1–72 (MINDINNFIE…AVNQFLFFLY (72 aa)). The Tyr recombinase domain occupies 84–246 (QETEKITLTQ…TPITLERYYR (163 aa)). Residues Lys149 and Arg212 contribute to the active site. Tyr244 acts as the O-(3'-phospho-DNA)-tyrosine intermediate in catalysis.

It belongs to the 'phage' integrase family. XerD-like subfamily.

The protein resides in the cytoplasm. Putative tyrosine recombinase. Not involved in the cutting and rejoining of the recombining DNA molecules on dif(SL) site. The chain is Tyrosine recombinase XerD-like from Streptococcus agalactiae serotype III (strain NEM316).